The primary structure comprises 443 residues: MSYMTPQEIVHELDKHIIGQDTAKRAVAIALRNRWRRQQVDEPLRHEITPKNILMIGPTGVGKTEIARRLARLANAPFIKIEATKFTEVGYVGRDVDSIIRDLVESAIKQAREREIRKNQPLAEDRAEERILDALLPPARDLGFEASPSEESNATRQKFRKKLREGELDDKEIEIEVAMAQTSMEIFAPPGMEELTSQIQGMFQNMGSGKRKMRKLRIREARKLLTEEEAARLVNDEELKLGAVQNVEQNGIVFLDEIDKITSRSEVSGSDVSRQGVQRDLLPLVEGTTISTKYGMIRTDHILFIASGAFHLAKPSDLIPELQGRFPIRVELESLSAEDFKQILTNTDACLIRQYQALLKTEGIELNFSEDAIGRLAEIAFSVNERTENIGARRLHTVMEKLLEDISFNATRYGGSTHVIDAVYVDERLGKLSQSEDLARYVL.

ATP is bound by residues Ile18 and 60 to 65 (GVGKTE). Residues 142-162 (LGFEASPSEESNATRQKFRKK) are disordered. Residues Asp256, Glu321, and Arg393 each coordinate ATP.

This sequence belongs to the ClpX chaperone family. HslU subfamily. As to quaternary structure, a double ring-shaped homohexamer of HslV is capped on each side by a ring-shaped HslU homohexamer. The assembly of the HslU/HslV complex is dependent on binding of ATP.

Its subcellular location is the cytoplasm. Functionally, ATPase subunit of a proteasome-like degradation complex; this subunit has chaperone activity. The binding of ATP and its subsequent hydrolysis by HslU are essential for unfolding of protein substrates subsequently hydrolyzed by HslV. HslU recognizes the N-terminal part of its protein substrates and unfolds these before they are guided to HslV for hydrolysis. The protein is ATP-dependent protease ATPase subunit HslU of Nitrosomonas europaea (strain ATCC 19718 / CIP 103999 / KCTC 2705 / NBRC 14298).